A 205-amino-acid chain; its full sequence is ATP phosphoribosyltransferase (205 aa).

Belongs to the ATP phosphoribosyltransferase family. Short subfamily. In terms of assembly, heteromultimer composed of HisG and HisZ subunits.

The protein resides in the cytoplasm. It catalyses the reaction 1-(5-phospho-beta-D-ribosyl)-ATP + diphosphate = 5-phospho-alpha-D-ribose 1-diphosphate + ATP. It functions in the pathway amino-acid biosynthesis; L-histidine biosynthesis; L-histidine from 5-phospho-alpha-D-ribose 1-diphosphate: step 1/9. Its function is as follows. Catalyzes the condensation of ATP and 5-phosphoribose 1-diphosphate to form N'-(5'-phosphoribosyl)-ATP (PR-ATP). Has a crucial role in the pathway because the rate of histidine biosynthesis seems to be controlled primarily by regulation of HisG enzymatic activity. This is ATP phosphoribosyltransferase from Ruthia magnifica subsp. Calyptogena magnifica.